The primary structure comprises 80 residues: Exodeoxyribonuclease 7 small subunit (80 aa).

It belongs to the XseB family. Heterooligomer composed of large and small subunits.

It is found in the cytoplasm. It carries out the reaction Exonucleolytic cleavage in either 5'- to 3'- or 3'- to 5'-direction to yield nucleoside 5'-phosphates.. Functionally, bidirectionally degrades single-stranded DNA into large acid-insoluble oligonucleotides, which are then degraded further into small acid-soluble oligonucleotides. The protein is Exodeoxyribonuclease 7 small subunit of Vibrio vulnificus (strain CMCP6).